The primary structure comprises 145 residues: Ribonuclease HI (145 aa).

The RNase H type-1 domain maps to 1–142 (MNQTVYLYTD…ADDLANRGAA (142 aa)). Mg(2+) is bound by residues D10, E48, D70, and D134.

The protein belongs to the RNase H family. As to quaternary structure, monomer. It depends on Mg(2+) as a cofactor.

Its subcellular location is the cytoplasm. The catalysed reaction is Endonucleolytic cleavage to 5'-phosphomonoester.. Functionally, endonuclease that specifically degrades the RNA of RNA-DNA hybrids. The protein is Ribonuclease HI of Neisseria meningitidis serogroup A / serotype 4A (strain DSM 15465 / Z2491).